We begin with the raw amino-acid sequence, 411 residues long: Serine hydroxymethyltransferase (411 aa).

120 to 122 (GHL) contributes to the (6S)-5,6,7,8-tetrahydrofolate binding site. Lysine 225 carries the post-translational modification N6-(pyridoxal phosphate)lysine. 350–352 (SPF) contacts (6S)-5,6,7,8-tetrahydrofolate.

Belongs to the SHMT family. As to quaternary structure, homodimer. Pyridoxal 5'-phosphate is required as a cofactor.

The protein resides in the cytoplasm. It catalyses the reaction (6R)-5,10-methylene-5,6,7,8-tetrahydrofolate + glycine + H2O = (6S)-5,6,7,8-tetrahydrofolate + L-serine. The protein operates within one-carbon metabolism; tetrahydrofolate interconversion. Its pathway is amino-acid biosynthesis; glycine biosynthesis; glycine from L-serine: step 1/1. Functionally, catalyzes the reversible interconversion of serine and glycine with tetrahydrofolate (THF) serving as the one-carbon carrier. This reaction serves as the major source of one-carbon groups required for the biosynthesis of purines, thymidylate, methionine, and other important biomolecules. Also exhibits THF-independent aldolase activity toward beta-hydroxyamino acids, producing glycine and aldehydes, via a retro-aldol mechanism. The protein is Serine hydroxymethyltransferase of Limosilactobacillus reuteri (strain DSM 20016) (Lactobacillus reuteri).